A 160-amino-acid polypeptide reads, in one-letter code: Transcription elongation factor GreA (160 aa).

Residues 10–37 (TLEGKAKLENELQELKTVKRKEVVERIK) are a coiled coil.

It belongs to the GreA/GreB family.

In terms of biological role, necessary for efficient RNA polymerase transcription elongation past template-encoded arresting sites. The arresting sites in DNA have the property of trapping a certain fraction of elongating RNA polymerases that pass through, resulting in locked ternary complexes. Cleavage of the nascent transcript by cleavage factors such as GreA or GreB allows the resumption of elongation from the new 3'terminus. GreA releases sequences of 2 to 3 nucleotides. The polypeptide is Transcription elongation factor GreA (Listeria welshimeri serovar 6b (strain ATCC 35897 / DSM 20650 / CCUG 15529 / CIP 8149 / NCTC 11857 / SLCC 5334 / V8)).